A 207-amino-acid polypeptide reads, in one-letter code: Adenylyl-sulfate kinase (207 aa).

34–41 is a binding site for ATP; the sequence is GLSGSGKS. Serine 108 (phosphoserine intermediate) is an active-site residue.

It belongs to the APS kinase family.

It carries out the reaction adenosine 5'-phosphosulfate + ATP = 3'-phosphoadenylyl sulfate + ADP + H(+). The protein operates within sulfur metabolism; hydrogen sulfide biosynthesis; sulfite from sulfate: step 2/3. Catalyzes the synthesis of activated sulfate. This is Adenylyl-sulfate kinase from Lactiplantibacillus plantarum (strain ATCC BAA-793 / NCIMB 8826 / WCFS1) (Lactobacillus plantarum).